We begin with the raw amino-acid sequence, 847 residues long: Leucine--tRNA ligase (847 aa).

A 'HIGH' region motif is present at residues 41 to 51; sequence PYPSGRIHMGH. The 'KMSKS' region signature appears at 619-623; it reads KMSKS. Lysine 622 is a binding site for ATP.

The protein belongs to the class-I aminoacyl-tRNA synthetase family.

The protein resides in the cytoplasm. It catalyses the reaction tRNA(Leu) + L-leucine + ATP = L-leucyl-tRNA(Leu) + AMP + diphosphate. The polypeptide is Leucine--tRNA ligase (Cereibacter sphaeroides (strain ATCC 17023 / DSM 158 / JCM 6121 / CCUG 31486 / LMG 2827 / NBRC 12203 / NCIMB 8253 / ATH 2.4.1.) (Rhodobacter sphaeroides)).